Reading from the N-terminus, the 142-residue chain is MRIMGLDFGERTIGVAVSDAMLLTAQGVKTIRRSPKELEELKTMLQDYEVDHIVLGYPKNMNGTLGPRAQATEEFAQILKEEFGLPVTLWDERLSTMGAQRSLLEADVSRAKRKQVIDKMAAVFILQGYLDYIRQKNGQNKE.

This sequence belongs to the YqgF nuclease family.

It localises to the cytoplasm. Could be a nuclease involved in processing of the 5'-end of pre-16S rRNA. In Desulfitobacterium hafniense (strain DSM 10664 / DCB-2), this protein is Putative pre-16S rRNA nuclease.